The chain runs to 371 residues: Cytochrome b (371 aa).

The next 4 membrane-spanning stretches (helical) occupy residues 25–45 (FGSM…FLAV), 69–90 (WIMQ…YIHI), 105–125 (WLSG…GYVL), and 170–190 (FFAL…IHII). Positions 75 and 89 each coordinate heme b. The heme b site is built by His174 and His188. His193 contributes to the a ubiquinone binding site. 4 consecutive transmembrane segments (helical) span residues 218–238 (YKDM…LSFM), 280–300 (LGGT…PFTH), 312–332 (LTQA…WTAT), and 339–358 (FTLI…IINP).

The protein belongs to the cytochrome b family. In terms of assembly, the cytochrome bc1 complex contains 3 respiratory subunits (MT-CYB, CYC1 and UQCRFS1), 2 core proteins (UQCRC1 and UQCRC2) and probably 6 low-molecular weight proteins. Requires heme b as cofactor.

Its subcellular location is the mitochondrion inner membrane. Component of the ubiquinol-cytochrome c reductase complex (complex III or cytochrome b-c1 complex) that is part of the mitochondrial respiratory chain. The b-c1 complex mediates electron transfer from ubiquinol to cytochrome c. Contributes to the generation of a proton gradient across the mitochondrial membrane that is then used for ATP synthesis. The sequence is that of Cytochrome b (MT-CYB) from Toxicocalamus preussi (Preuss's forest snake).